The sequence spans 667 residues: DNA ligase (667 aa).

Residues Asp-32–Asp-36, Ser-81–Leu-82, and Glu-110 contribute to the NAD(+) site. Lys-112 functions as the N6-AMP-lysine intermediate in the catalytic mechanism. Arg-133, Glu-167, Lys-283, and Lys-307 together coordinate NAD(+). Residues Cys-401, Cys-404, Cys-419, and Cys-424 each contribute to the Zn(2+) site. Residues Glu-586 to Ser-667 form the BRCT domain.

The protein belongs to the NAD-dependent DNA ligase family. LigA subfamily. It depends on Mg(2+) as a cofactor. The cofactor is Mn(2+).

The catalysed reaction is NAD(+) + (deoxyribonucleotide)n-3'-hydroxyl + 5'-phospho-(deoxyribonucleotide)m = (deoxyribonucleotide)n+m + AMP + beta-nicotinamide D-nucleotide.. DNA ligase that catalyzes the formation of phosphodiester linkages between 5'-phosphoryl and 3'-hydroxyl groups in double-stranded DNA using NAD as a coenzyme and as the energy source for the reaction. It is essential for DNA replication and repair of damaged DNA. The polypeptide is DNA ligase (Staphylococcus aureus (strain USA300)).